The following is an 83-amino-acid chain: Small integral membrane protein 22 (83 aa).

A helical transmembrane segment spans residues 32–52 (VAFIVFLTFMGTVLLLLLLVV). The disordered stretch occupies residues 60 to 83 (SPGPRRESPRKERPKGVDNLALEP). Basic and acidic residues predominate over residues 63 to 75 (PRRESPRKERPKG).

In terms of assembly, interacts with CANX and DDOST. Interacts with SQLE; this interaction modulates lipid droplet formation.

It is found in the membrane. It localises to the late endosome. May modulate lipid droplet formation throught interaction with SQLE. The protein is Small integral membrane protein 22 of Homo sapiens (Human).